The primary structure comprises 261 residues: MTDPFTSDGAKMPPKPFTIEEGRRQVRSFVLRQGRFTPAQQRTFDALWPRFGLDYLGAPRDLAATFGRDAHKVLEIGFGNGAALRFAAQQDPSRDYIGIEVHAPGVGRLLNALEEDGSTHVRLYHHDAVEVLEHEIADGALDEVRIYFPDPWHKKRHNKRRLIQPAFAQLLVRKLREGGRLHAATDWADYAEQMWDVLDATPGLVNRAGPRGHVERPTWRPQTHFETRGQKLGHGVWDLLYDRDSGIGNRESQEQLPSASG.

4 residues coordinate S-adenosyl-L-methionine: glutamate 75, glutamate 100, aspartate 127, and aspartate 150. The active site involves aspartate 150. Lysine 154 contributes to the substrate binding site. An interaction with RNA region spans residues 156–161 (RHNKRR). Substrate contacts are provided by residues aspartate 186 and 223–226 (THFE).

This sequence belongs to the class I-like SAM-binding methyltransferase superfamily. TrmB family.

It catalyses the reaction guanosine(46) in tRNA + S-adenosyl-L-methionine = N(7)-methylguanosine(46) in tRNA + S-adenosyl-L-homocysteine. The protein operates within tRNA modification; N(7)-methylguanine-tRNA biosynthesis. Catalyzes the formation of N(7)-methylguanine at position 46 (m7G46) in tRNA. The polypeptide is tRNA (guanine-N(7)-)-methyltransferase (Xanthomonas axonopodis pv. citri (strain 306)).